The chain runs to 116 residues: Methionine-R-sulfoxide reductase B1 (116 aa).

The MsrB domain maps to Met-1–Lys-106. Zn(2+) contacts are provided by Cys-23, Cys-26, Cys-71, and Cys-74. The active-site Nucleophile is Sec-95. A non-standard amino acid (selenocysteine) is located at residue Sec-95.

This sequence belongs to the MsrB Met sulfoxide reductase family. The cofactor is Zn(2+). In terms of processing, truncated MSRB1/SEPX1 proteins produced by failed UGA/Sec decoding are ubiquitinated by some Cul2-RING E3 ubiquitin-protein ligase complexes (containing either PRAME, PRAMF6, PRAMF9 or FEM1C as substrate-recognition component).

The protein resides in the cytoplasm. The protein localises to the nucleus. Its subcellular location is the cytoskeleton. The catalysed reaction is L-methionyl-[protein] + [thioredoxin]-disulfide + H2O = L-methionyl-(R)-S-oxide-[protein] + [thioredoxin]-dithiol. The enzyme catalyses [thioredoxin]-disulfide + L-methionine + H2O = L-methionine (R)-S-oxide + [thioredoxin]-dithiol. In terms of biological role, methionine-sulfoxide reductase that specifically reduces methionine (R)-sulfoxide back to methionine. While in many cases, methionine oxidation is the result of random oxidation following oxidative stress, methionine oxidation is also a post-translational modification that takes place on specific residue. Acts as a regulator of actin assembly by reducing methionine (R)-sulfoxide mediated by MICALs (MICAL1, MICAL2 or MICAL3) on actin, thereby promoting filament repolymerization. Plays a role in innate immunity by reducing oxidized actin, leading to actin repolymerization in macrophages. The sequence is that of Methionine-R-sulfoxide reductase B1 (MSRB1) from Homo sapiens (Human).